Consider the following 344-residue polypeptide: sn-glycerol-3-phosphate import ATP-binding protein UgpC 2 (344 aa).

One can recognise an ABC transporter domain in the interval 4-234; it reads IELIDLKKNY…PETVFVAGFI (231 aa). 36–43 lines the ATP pocket; that stretch reads GPSGCGKS.

This sequence belongs to the ABC transporter superfamily. sn-glycerol-3-phosphate importer (TC 3.A.1.1.3) family. As to quaternary structure, the complex is composed of two ATP-binding proteins (UgpC), two transmembrane proteins (UgpA and UgpE) and a solute-binding protein (UgpB).

The protein resides in the cell inner membrane. The enzyme catalyses sn-glycerol 3-phosphate(out) + ATP + H2O = sn-glycerol 3-phosphate(in) + ADP + phosphate + H(+). Part of the ABC transporter complex UgpBAEC involved in sn-glycerol-3-phosphate (G3P) import. Responsible for energy coupling to the transport system. In Rhizobium johnstonii (strain DSM 114642 / LMG 32736 / 3841) (Rhizobium leguminosarum bv. viciae), this protein is sn-glycerol-3-phosphate import ATP-binding protein UgpC 2.